Reading from the N-terminus, the 400-residue chain is uncharacterized protein (400 aa).

The first 31 residues, 1-31 (MENPIKPVATRSIGIAVVLLVVGIVIGFAVG), serve as a signal peptide directing secretion.

Belongs to the bacterial solute-binding protein 1 family. WtpA subfamily.

This is an uncharacterized protein from Thermoplasma acidophilum (strain ATCC 25905 / DSM 1728 / JCM 9062 / NBRC 15155 / AMRC-C165).